The primary structure comprises 77 residues: Teretoxin Tan15.2 (77 aa).

Residues 1–21 (MTRLTVVFLAILVLLPLATSN) form the signal peptide. Positions 22 to 40 (SGADEAPASLSDLLHRTKR) are excised as a propeptide.

Post-translationally, contains 4 disulfide bonds. Expressed by the venom duct.

It is found in the secreted. The chain is Teretoxin Tan15.2 from Terebra anilis (Auger snail).